A 466-amino-acid polypeptide reads, in one-letter code: Citrate synthase, mitochondrial (466 aa).

A mitochondrion-targeting transit peptide spans 1 to 27 (MALLTAAARLFGAKNASCLVLAARHAS). The SIFI-degron motif lies at 2 to 21 (ALLTAAARLFGAKNASCLVL). Lys-57 carries the N6-succinyllysine modification. An N6-acetyllysine; alternate modification is found at Lys-76. Lys-76 carries the post-translational modification N6-succinyllysine; alternate. Residues Lys-103 and Lys-193 each carry the N6-succinyllysine modification. Position 226 is a phosphoserine (Ser-226). His-301 is a catalytic residue. 2 positions are modified to N6-acetyllysine; alternate: Lys-321 and Lys-327. 2 positions are modified to N6-succinyllysine; alternate: Lys-321 and Lys-327. His-347 is a catalytic residue. Residue Arg-356 coordinates oxaloacetate. Lys-375 is subject to N6-acetyllysine; alternate. The residue at position 375 (Lys-375) is an N6-succinyllysine; alternate. Residue Lys-382 is modified to N6-acetyllysine. Lys-393 carries the N6-acetyllysine; alternate modification. At Lys-393 the chain carries N6-succinyllysine; alternate. Position 395 is an N6,N6,N6-trimethyllysine (Lys-395). Asp-402 is an active-site residue. Positions 428 and 448 each coordinate oxaloacetate. Lys-450 carries the N6-succinyllysine modification. The residue at position 459 (Lys-459) is an N6-acetyllysine; alternate. Lys-459 carries the N6-succinyllysine; alternate modification.

Belongs to the citrate synthase family. Homodimer. In terms of processing, methylated. Trimethylation at Lys-395 by CSKMT decreases citrate synthase activity. In response to mitochondrial stress, the precursor protein is ubiquitinated by the SIFI complex in the cytoplasm before mitochondrial import, leading to its degradation. Within the SIFI complex, UBR4 initiates ubiquitin chain that are further elongated or branched by KCMF1.

It is found in the mitochondrion matrix. It catalyses the reaction oxaloacetate + acetyl-CoA + H2O = citrate + CoA + H(+). It functions in the pathway carbohydrate metabolism; tricarboxylic acid cycle; isocitrate from oxaloacetate: step 1/2. In terms of biological role, key enzyme of the Krebs tricarboxylic acid cycle which catalyzes the synthesis of citrate from acetyl coenzyme A and oxaloacetate. This chain is Citrate synthase, mitochondrial (CS), found in Bos taurus (Bovine).